A 656-amino-acid polypeptide reads, in one-letter code: FAST kinase domain-containing protein 3, mitochondrial (656 aa).

One can recognise an RAP domain in the interval 587-645; sequence VALCIDGPQRFCLGSKHLLGKEAIKQRHLRLLGYQVVQVPYHELELLTSRLELVDYLQR.

This sequence belongs to the FAST kinase family.

The protein resides in the mitochondrion. Required for normal mitochondrial respiration. Increases steady-state levels and half-lives of a subset of mature mitochondrial mRNAs MT-ND2, MT-ND3, MT-CYTB, MT-CO2, and MT-ATP8/6. Promotes MT-CO1 mRNA translation and increases mitochondrial complex IV assembly and activity. This is FAST kinase domain-containing protein 3, mitochondrial (Fastkd3) from Rattus norvegicus (Rat).